The primary structure comprises 252 residues: Phosphate import ATP-binding protein PstB (252 aa).

One can recognise an ABC transporter domain in the interval M5–I247. G37–S44 is a binding site for ATP.

The protein belongs to the ABC transporter superfamily. Phosphate importer (TC 3.A.1.7) family. In terms of assembly, the complex is composed of two ATP-binding proteins (PstB), two transmembrane proteins (PstC and PstA) and a solute-binding protein (PstS).

The protein resides in the cell inner membrane. It carries out the reaction phosphate(out) + ATP + H2O = ADP + 2 phosphate(in) + H(+). Functionally, part of the ABC transporter complex PstSACB involved in phosphate import. Responsible for energy coupling to the transport system. This is Phosphate import ATP-binding protein PstB from Bartonella quintana (strain Toulouse) (Rochalimaea quintana).